Reading from the N-terminus, the 392-residue chain is O-phospho-L-seryl-tRNA:Cys-tRNA synthase 1 (392 aa).

Pyridoxal 5'-phosphate is bound by residues 85–86 (AR), asparagine 190, and 213–215 (SGH). At lysine 216 the chain carries N6-(pyridoxal phosphate)lysine.

This sequence belongs to the SepCysS family. Homodimer. Interacts with SepRS. Pyridoxal 5'-phosphate is required as a cofactor.

The enzyme catalyses O-phospho-L-seryl-tRNA(Cys) + hydrogen sulfide + H(+) = L-cysteinyl-tRNA(Cys) + phosphate. Converts O-phospho-L-seryl-tRNA(Cys) (Sep-tRNA(Cys)) to L-cysteinyl-tRNA(Cys) (Cys-tRNA(Cys)). The chain is O-phospho-L-seryl-tRNA:Cys-tRNA synthase 1 from Methanoregula boonei (strain DSM 21154 / JCM 14090 / 6A8).